Reading from the N-terminus, the 274-residue chain is Kit ligand (274 aa).

Positions Met-1–Thr-25 are cleaved as a signal peptide. The Extracellular segment spans residues Lys-26 to Gln-215. Intrachain disulfides connect Cys-29-Cys-114 and Cys-68-Cys-164. Asn-90, Asn-97, Asn-145, Asn-196, and Asn-207 each carry an N-linked (GlcNAc...) asparagine glycan. A helical membrane pass occupies residues Trp-216–Trp-238. The Cytoplasmic portion of the chain corresponds to Lys-239 to Val-274.

The protein belongs to the SCF family. As to quaternary structure, homodimer, non-covalently linked. In terms of processing, a soluble form is produced by proteolytic processing of the extracellular domain.

It localises to the cytoplasm. The protein resides in the cytoskeleton. It is found in the cell membrane. Its subcellular location is the cell projection. The protein localises to the lamellipodium. It localises to the filopodium. The protein resides in the secreted. Stimulates the proliferation of mast cells. Able to augment the proliferation of both myeloid and lymphoid hematopoietic progenitors in bone marrow culture. Also mediates cell-cell adhesion. Acts synergistically with other cytokines, probably interleukins. The polypeptide is Kit ligand (KITLG) (Equus caballus (Horse)).